We begin with the raw amino-acid sequence, 1044 residues long: Protein ITPRID1 (1044 aa).

Polar residues predominate over residues 1–14 (MMAQKSQGSDNLQE). Disordered stretches follow at residues 1–20 (MMAQ…EKSK), 230–251 (EEKA…EHRR), 388–489 (MEEV…SSQE), and 583–607 (PEGA…HTQD). The span at 388-398 (MEEVQSFEEET) shows a compositional bias: acidic residues. 2 stretches are compositionally biased toward polar residues: residues 460–469 (HSLVSSQDCQ) and 480–489 (RASMSFSSQE). Residues 896 to 937 (SRDMSEEEREEAEQLQTLREALRQQVAELEFQLGDRAQQIRE) adopt a coiled-coil conformation.

The protein is Protein ITPRID1 of Homo sapiens (Human).